The primary structure comprises 262 residues: Catechol O-methyltransferase domain-containing protein 1 (262 aa).

Residues 12–32 (AALALGSAALGAAFATGLLLG) traverse the membrane as a helical; Signal-anchor for type II membrane protein segment. S-adenosyl-L-methionine contacts are provided by residues Asp-108, 110-111 (GT), Ser-116, Glu-134, Val-135, Ala-163, Asp-185, Asp-187, and Tyr-194.

Belongs to the class I-like SAM-binding methyltransferase superfamily. Cation-dependent O-methyltransferase family. Homodimer.

The protein localises to the membrane. Putative O-methyltransferase. This is Catechol O-methyltransferase domain-containing protein 1 (Comtd1) from Mus musculus (Mouse).